A 433-amino-acid polypeptide reads, in one-letter code: MYFNVEKVVYEGPSSKNLLAYKFYNPEEEIAGKKMRDWFRFAVAYWHTFNSRGEDPFGSATFERPWFKKDPMDTAFAKVDALFEFCEKTGVEYFTFHDRDLAHEGLTLRESNKILDKVVEKIKEYMKSSNVKLLWGTANLFSHPRYAQGAATSPNPLVFSYAASQVKKMLDVTKELGGLGYVLWGGREGYDNLLLTDSALEEKLFARFLEMVVEYKERIGFNGVLMIEPKPKEPTKHQYDFDASTVLYFLKKHNLFEHFKLNIEANHATLAGHTFAHELRVARLNGKLGSIDANRGDLLLGWDTDQFPTDVYETTFAMYEVLENNGLDCGFNFDAKVRRASIDPEDIVYAHVSSMDAFALGLKLAVKLREKVKPMIEERYSEYNSEIGMKILEGKTTLDELSSYVEDLTDVRVKSLKQELLEMVINDVIFGGR.

Catalysis depends on residues His97 and Asp100. Residues Glu228, Glu264, His267, Asp292, Asp303, Asp305, and Asp334 each contribute to the Mg(2+) site.

The protein belongs to the xylose isomerase family. Homotetramer. Mg(2+) serves as cofactor.

The protein localises to the cytoplasm. The catalysed reaction is alpha-D-xylose = alpha-D-xylulofuranose. This chain is Xylose isomerase, found in Fervidobacterium gondwanense.